Reading from the N-terminus, the 1085-residue chain is DNA mismatch repair protein MutS (1085 aa).

Residues 533–564 (DEDLFGEEEQNAPPVGSSNHAVGTQPSADDEA) are disordered. Residues 548-559 (GSSNHAVGTQPS) show a composition bias toward polar residues. An ATP-binding site is contributed by 812–819 (GPNMSGKS). A disordered region spans residues 997 to 1042 (ERRAPRSAPPTVPARGDDRRSAGRASSSGAGAARGEQGRTLPDGQL). Positions 1019 to 1031 (GRASSSGAGAARG) are enriched in low complexity.

The protein belongs to the DNA mismatch repair MutS family.

This protein is involved in the repair of mismatches in DNA. It is possible that it carries out the mismatch recognition step. This protein has a weak ATPase activity. This is DNA mismatch repair protein MutS from Roseiflexus sp. (strain RS-1).